The chain runs to 530 residues: Asc-type amino acid transporter 1 (530 aa).

Residues 1–36 (MRRDSDMASHIQQPGGHGNPGPAPSPSPGPGPGPGA) are disordered. The segment covering 21–33 (GPAPSPSPGPGPG) has biased composition (pro residues). Transmembrane regions (helical) follow at residues 46–66 (IGLV…GIFI), 78–98 (VGLA…GSLC), 119–139 (IFGG…MYPT), 192–212 (IQVI…TVGF), 274–294 (AIFI…VAYF), 316–336 (LLGY…FGGI), 368–388 (CTPI…MLVG), 394–414 (INYV…GLLV), 430–450 (LLVP…SFIS), and 454–474 (VCGV…LGVF). The segment at 508–530 (EEENGPMGQPSPLPITDKPLKTQ) is disordered.

It belongs to the amino acid-polyamine-organocation (APC) superfamily. As to quaternary structure, disulfide-linked heterodimer with the amino acid transport protein SLC3A2/4F2hc.

The protein resides in the cell membrane. The catalysed reaction is L-alanine(in) + glycine(out) = L-alanine(out) + glycine(in). It catalyses the reaction L-serine(out) + L-alanine(in) = L-serine(in) + L-alanine(out). The enzyme catalyses L-threonine(out) + L-alanine(in) = L-threonine(in) + L-alanine(out). It carries out the reaction L-cysteine(out) + L-alanine(in) = L-cysteine(in) + L-alanine(out). The catalysed reaction is 2-aminoisobutanoate(out) + L-alanine(in) = 2-aminoisobutanoate(in) + L-alanine(out). It catalyses the reaction D-serine(out) + L-alanine(in) = D-serine(in) + L-alanine(out). The enzyme catalyses D-alanine(out) + L-alanine(in) = D-alanine(in) + L-alanine(out). It carries out the reaction L-valine(out) + L-alanine(in) = L-valine(in) + L-alanine(out). The catalysed reaction is L-methionine(out) + L-alanine(in) = L-methionine(in) + L-alanine(out). It catalyses the reaction beta-alanine(out) + L-alanine(in) = beta-alanine(in) + L-alanine(out). The enzyme catalyses D-cysteine(out) + L-alanine(in) = D-cysteine(in) + L-alanine(out). It carries out the reaction D-threonine(out) + L-alanine(in) = D-threonine(in) + L-alanine(out). The catalysed reaction is D-isoleucine(out) + D-serine(in) = D-isoleucine(in) + D-serine(out). It catalyses the reaction D-serine(in) = D-serine(out). Its function is as follows. Associates with SLC3A2/4F2hc to form a functional heterodimeric complex that translocates small neutral L- and D-amino acids across the plasma membrane. Preferentially mediates exchange transport, but can also operate via facilitated diffusion. Acts as a major transporter for glycine, L- and D-serine in the central nervous system. At the spinal cord and brainstem regulates glycine metabolism and glycinergic inhibitory neurotransmission by providing for glycine de novo synthesis from L-serine and glycine recycling from astrocytes to glycinergic motor neurons. At Schaffer collateral-CA1 synapses mediates D-serine and glycine release that modulates post-synaptic activation of NMDA receptors and excitatory glutamatergic transmission. May regulate D-serine release from mesenchymal progenitors located in developing subcutaneous adipose tissue, favoring white adipocyte over thermogenic beige adipocyte lineage commitment. This chain is Asc-type amino acid transporter 1 (Slc7a10), found in Rattus norvegicus (Rat).